The following is a 508-amino-acid chain: MWELLVFLLFAVAYFLWPKAKCPGAKYPKSLPSLPLVGSLLFLPRSGHPHKNFFKLQKKYGPIYSFRLGTKTTVMVGDHQLAKEVLVKKGKEFSGRPHVVTLDILSDNQKGIAFADHGASWQMHRKLALATFALFKDGDQRLEKIICREISLLCDNLAMQDGQSIDLYLPLFLAVTNIICLICFNSSFKNGDPALKIIQNYNEGILKTLGKDNLVDIFPVLKIFPNKTLEKMKNYVKNRDELLREILEKHKENFSNDSITNMLDVLIQARMNSDNNGAASDQDSKLLSDKHILTTIGDIFGAGVETTTSVVRWTVAFLLHHPQLYKKLQEEIDQNIGFSRTPTMSDRNQLILLEATIREVLRIRPVAPTLIPHKAIMDSSIGEFAVDKGTNVIINLWALHHNEKEWYRPDQFMPERFLDPTRSQLISPSLSYLPFGAGPRSCLGESLARQEVFLFMAWLLQRFDLEVPDDGQLPHLEGNPTVVFLIAPFKVKVKVRQAWREAQAEGST.

Asn-202 is a substrate binding site. Residue Cys-442 coordinates heme.

The protein belongs to the cytochrome P450 family. It depends on heme as a cofactor.

It localises to the endoplasmic reticulum membrane. The protein resides in the microsome membrane. The catalysed reaction is a C21-steroid + reduced [NADPH--hemoprotein reductase] + O2 = a 17alpha-hydroxy-C21-steroid + oxidized [NADPH--hemoprotein reductase] + H2O + H(+). The enzyme catalyses progesterone + reduced [NADPH--hemoprotein reductase] + O2 = 17alpha-hydroxyprogesterone + oxidized [NADPH--hemoprotein reductase] + H2O + H(+). It catalyses the reaction pregnenolone + reduced [NADPH--hemoprotein reductase] + O2 = 17alpha-hydroxypregnenolone + oxidized [NADPH--hemoprotein reductase] + H2O + H(+). It carries out the reaction 17alpha-hydroxyprogesterone + reduced [NADPH--hemoprotein reductase] + O2 = androst-4-ene-3,17-dione + acetate + oxidized [NADPH--hemoprotein reductase] + H2O + 2 H(+). The catalysed reaction is 17alpha-hydroxyprogesterone + reduced [NADPH--hemoprotein reductase] + O2 = 16alpha,17alpha-dihydroxyprogesterone + oxidized [NADPH--hemoprotein reductase] + H2O + H(+). The enzyme catalyses 16alpha,17alpha-dihydroxyprogesterone + reduced [NADPH--hemoprotein reductase] + O2 = 6beta,16alpha,17alpha-trihydroxyprogesterone + oxidized [NADPH--hemoprotein reductase] + H2O + H(+). It catalyses the reaction 17alpha-hydroxypregnenolone + reduced [NADPH--hemoprotein reductase] + O2 = 3beta-hydroxyandrost-5-en-17-one + acetate + oxidized [NADPH--hemoprotein reductase] + H2O + 2 H(+). It carries out the reaction 16alpha,17alpha-dihydroxypregnenolone + reduced [NADPH--hemoprotein reductase] + O2 = 3beta,16alpha-dihydroxy-androst-5-en-17-one + acetate + oxidized [NADPH--hemoprotein reductase] + H2O + 2 H(+). The catalysed reaction is 3beta-hydroxyandrost-5-en-17-one + reduced [NADPH--hemoprotein reductase] + O2 = 3beta,16alpha-dihydroxy-androst-5-en-17-one + oxidized [NADPH--hemoprotein reductase] + H2O + H(+). The enzyme catalyses androst-4-ene-3,17-dione + reduced [NADPH--hemoprotein reductase] + O2 = 16alpha-hydroxyandrost-4-ene-3,17-dione + oxidized [NADPH--hemoprotein reductase] + H2O + H(+). It functions in the pathway steroid hormone biosynthesis. The protein operates within steroid biosynthesis; glucocorticoid biosynthesis. Its activity is regulated as follows. Regulated predominantly by intracellular cAMP levels. The 17,20-lyase activity is stimulated by cytochrome b5, which acts as an allosteric effector increasing the Vmax of the lyase activity. In terms of biological role, a cytochrome P450 monooxygenase involved in corticoid and androgen biosynthesis. Catalyzes 17-alpha hydroxylation of C21 steroids, which is common for both pathways. A second oxidative step, required only for androgen synthesis, involves an acyl-carbon cleavage. The 17-alpha hydroxy intermediates, as part of adrenal glucocorticoids biosynthesis pathway, are precursors of cortisol. Hydroxylates steroid hormones, pregnenolone and progesterone to form 17-alpha hydroxy metabolites, followed by the cleavage of the C17-C20 bond to form C19 steroids, dehydroepiandrosterone (DHEA) and androstenedione. Has 16-alpha hydroxylase activity. Catalyzes 16-alpha hydroxylation of 17-alpha hydroxy pregnenolone, followed by the cleavage of the C17-C20 bond to form 16-alpha-hydroxy DHEA. Also 16-alpha hydroxylates androgens, relevant for estriol synthesis. Mechanistically, uses molecular oxygen inserting one oxygen atom into a substrate, and reducing the second into a water molecule, with two electrons provided by NADPH via cytochrome P450 reductase (CPR; NADPH-ferrihemoprotein reductase). In Felis catus (Cat), this protein is Steroid 17-alpha-hydroxylase/17,20 lyase (CYP17A1).